Here is a 478-residue protein sequence, read N- to C-terminus: Cytochrome c-552 (478 aa).

The signal sequence occupies residues 1–26; that stretch reads MARKTLRARRFFSLIFPFFFITSVYA. H94 contributes to the heme c binding site. Residues C122, C125, and K126 each contribute to the heme site. The heme c site is built by C160, C163, H164, C209, C212, and H213. 4 residues coordinate Ca(2+): E215, Y216, K261, and Q263. Substrate is bound at residue Y216. H264 contributes to the substrate binding site. Heme c contacts are provided by H275, C282, C285, H286, H301, C314, C317, H318, and H393.

It belongs to the cytochrome c-552 family. Requires Ca(2+) as cofactor. Heme c is required as a cofactor.

It localises to the periplasm. The catalysed reaction is 6 Fe(III)-[cytochrome c] + NH4(+) + 2 H2O = 6 Fe(II)-[cytochrome c] + nitrite + 8 H(+). Its pathway is nitrogen metabolism; nitrate reduction (assimilation). In terms of biological role, catalyzes the reduction of nitrite to ammonia, consuming six electrons in the process. In Salmonella schwarzengrund (strain CVM19633), this protein is Cytochrome c-552.